The chain runs to 385 residues: Probable dual-specificity RNA methyltransferase RlmN (385 aa).

Residues 1–24 (MTATTAESGNLLPLVSGRSRPPRH) form a disordered region. The active-site Proton acceptor is the glutamate 114. The 245-residue stretch at 120–364 (YPQRATVCVS…AATVRDTRGR (245 aa)) folds into the Radical SAM core domain. Cysteine 127 and cysteine 370 form a disulfide bridge. 3 residues coordinate [4Fe-4S] cluster: cysteine 134, cysteine 138, and cysteine 141. S-adenosyl-L-methionine contacts are provided by residues 194-195 (GE), serine 228, 251-253 (SLH), and asparagine 327. Cysteine 370 acts as the S-methylcysteine intermediate in catalysis.

This sequence belongs to the radical SAM superfamily. RlmN family. [4Fe-4S] cluster is required as a cofactor.

The protein localises to the cytoplasm. The catalysed reaction is adenosine(2503) in 23S rRNA + 2 reduced [2Fe-2S]-[ferredoxin] + 2 S-adenosyl-L-methionine = 2-methyladenosine(2503) in 23S rRNA + 5'-deoxyadenosine + L-methionine + 2 oxidized [2Fe-2S]-[ferredoxin] + S-adenosyl-L-homocysteine. It carries out the reaction adenosine(37) in tRNA + 2 reduced [2Fe-2S]-[ferredoxin] + 2 S-adenosyl-L-methionine = 2-methyladenosine(37) in tRNA + 5'-deoxyadenosine + L-methionine + 2 oxidized [2Fe-2S]-[ferredoxin] + S-adenosyl-L-homocysteine. Functionally, specifically methylates position 2 of adenine 2503 in 23S rRNA and position 2 of adenine 37 in tRNAs. The sequence is that of Probable dual-specificity RNA methyltransferase RlmN from Parafrankia sp. (strain EAN1pec).